A 344-amino-acid chain; its full sequence is Uroporphyrinogen decarboxylase (344 aa).

Residues 23-27 (RQAGR), Asp-73, Tyr-149, Thr-204, and His-321 contribute to the substrate site.

It belongs to the uroporphyrinogen decarboxylase family. As to quaternary structure, homodimer.

The protein localises to the cytoplasm. The catalysed reaction is uroporphyrinogen III + 4 H(+) = coproporphyrinogen III + 4 CO2. It functions in the pathway porphyrin-containing compound metabolism; protoporphyrin-IX biosynthesis; coproporphyrinogen-III from 5-aminolevulinate: step 4/4. Its function is as follows. Catalyzes the decarboxylation of four acetate groups of uroporphyrinogen-III to yield coproporphyrinogen-III. The polypeptide is Uroporphyrinogen decarboxylase (Francisella tularensis subsp. mediasiatica (strain FSC147)).